The primary structure comprises 395 residues: Cation channel sperm-associated protein 3 (395 aa).

Over 1–48 the chain is Cytoplasmic; sequence MSQHFHHNPVRVKSGSLFATASEALQARLSKIKRKDKECQAYFRKVIK. The chain crosses the membrane as a helical span at residues 49–71; it reads STFFQIVMITTVTTNSFLLVLGT. Residues 72–80 are Extracellular-facing; it reads NYDIQFEFF. The chain crosses the membrane as a helical span at residues 81-107; that stretch reads RTFEVSELFFVSVYVCEFLMKVYVDPI. Residue Thr-108 is a topological domain, cytoplasmic. A helical membrane pass occupies residues 109–131; that stretch reads YWKDGYNILDVIILIILTIPYLL. Topologically, residues 132–143 are extracellular; sequence RKIKGNHSAYLH. The chain crosses the membrane as a helical span at residues 144-160; the sequence is FADGIQSLRILKLISYS. The Cytoplasmic segment spans residues 161-168; it reads RGIRTLII. A helical membrane pass occupies residues 169-195; sequence AVGETVYTVASVLTLLFLLMFVFAILG. Topologically, residues 196 to 216 are extracellular; the sequence is FCLFGVTDRGDLENWGNLASA. Residues 217–236 constitute an intramembrane region (helical; Pore-forming); the sequence is FFTLFSLATVDGWTDLQEEL. Residues 237–242 are Extracellular-facing; the sequence is DKRKFT. The chain crosses the membrane as a helical span at residues 243–268; sequence VSRAFTILFILLASFIFLNMFVGVMI. Residues 269–395 are Cytoplasmic-facing; the sequence is MHTEDSMKKF…ESSSSLSGLS (127 aa).

The protein belongs to the cation channel sperm-associated (TC 1.A.1.19) family. As to quaternary structure, component of the CatSper complex or CatSpermasome composed of the core pore-forming members CATSPER1, CATSPER2, CATSPER3 and CATSPER4 as well as auxiliary members CATSPERB, CATSPERG2, CATSPERD, CATSPERE, CATSPERZ, C2CD6/CATSPERT, SLCO6C1, TMEM249, TMEM262 and EFCAB9. HSPA1 may be an additional auxiliary complex member. The core complex members CATSPER1, CATSPER2, CATSPER3 and CATSPER4 form a heterotetrameric channel. The auxiliary CATSPERB, CATSPERG2, CATSPERD and CATSPERE subunits form a pavilion-like structure over the pore which stabilizes the complex through interactions with CATSPER4, CATSPER3, CATSPER1 and CATSPER2 respectively. SLCO6C1 interacts with CATSPERE and TMEM262/CATSPERH interacts with CATSPERB, further stabilizing the complex. C2CD6/CATSPERT interacts at least with CATSPERD and is required for targeting the CatSper complex in the flagellar membrane. As to expression, testis-specific.

Its subcellular location is the cell projection. The protein resides in the cilium. The protein localises to the flagellum membrane. It catalyses the reaction Ca(2+)(in) = Ca(2+)(out). Its activity is regulated as follows. In contrast to the human ortholog, not activated by progesterone. Activated by intracellular alkalinization. Functionally, pore-forming subunit of the CatSper complex, a sperm-specific voltage-gated calcium channel that plays a central role in sperm cell hyperactivation. Controls calcium entry to mediate the hyperactivated motility, a step needed for sperm motility which is essential late in the preparation of sperm for fertilization. The protein is Cation channel sperm-associated protein 3 (Catsper3) of Mus musculus (Mouse).